Consider the following 411-residue polypeptide: Probable glutamate dehydrogenase 3 (411 aa).

Residue K102 is part of the active site.

This sequence belongs to the Glu/Leu/Phe/Val dehydrogenases family.

The catalysed reaction is L-glutamate + NAD(+) + H2O = 2-oxoglutarate + NH4(+) + NADH + H(+). It carries out the reaction L-glutamate + NADP(+) + H2O = 2-oxoglutarate + NH4(+) + NADPH + H(+). The sequence is that of Probable glutamate dehydrogenase 3 (GSH3) from Arabidopsis thaliana (Mouse-ear cress).